Reading from the N-terminus, the 216-residue chain is U1 small nuclear ribonucleoprotein C (216 aa).

The segment at 4-36 (FFCDYCDVYLTHDSMSVRKAHNSGRNHLRNVVD) adopts a Matrin-type zinc-finger fold. Disordered regions lie at residues 70-89 (PQNQ…PGAG) and 125-216 (PGGI…ADKR). Pro residues-rich tracts occupy residues 140–149 (PPMPPFPGMP) and 157–204 (GVPP…PPFG).

It belongs to the U1 small nuclear ribonucleoprotein C family. U1 snRNP is composed of the 7 core Sm proteins B/B', D1, D2, D3, E, F and G that assemble in a heptameric protein ring on the Sm site of the small nuclear RNA to form the core snRNP, and at least 3 U1 snRNP-specific proteins U1-70K, U1-A and U1-C. U1-C interacts with U1 snRNA and the 5' splice-site region of the pre-mRNA.

Its subcellular location is the nucleus. Its function is as follows. Component of the spliceosomal U1 snRNP, which is essential for recognition of the pre-mRNA 5' splice-site and the subsequent assembly of the spliceosome. U1-C is directly involved in initial 5' splice-site recognition for both constitutive and regulated alternative splicing. The interaction with the 5' splice-site seems to precede base-pairing between the pre-mRNA and the U1 snRNA. Stimulates commitment or early (E) complex formation by stabilizing the base pairing of the 5' end of the U1 snRNA and the 5' splice-site region. This is U1 small nuclear ribonucleoprotein C from Neurospora crassa (strain ATCC 24698 / 74-OR23-1A / CBS 708.71 / DSM 1257 / FGSC 987).